We begin with the raw amino-acid sequence, 1430 residues long: Death-associated protein kinase 1 (1430 aa).

One can recognise a Protein kinase domain in the interval 13–275 (YDTGEELGSG…IQDSLQHPWI (263 aa)). ATP contacts are provided by residues 19 to 27 (LGSGQFAVV), Lys42, 94 to 96 (ELV), and Glu100. Asp139 acts as the Proton acceptor in catalysis. Position 161 (Asp161) interacts with ATP. The segment at 267 to 334 (QDSLQHPWIK…RSNMSVARSD (68 aa)) is calmodulin-binding. The residue at position 289 (Ser289) is a Phosphoserine; by RPS6KA1 and RPS6KA3. The interval 292 to 301 (NMEKFKKFAA) is autoinhibitory domain. Position 308 is a phosphoserine; by autocatalysis (Ser308). Residues Ser319 and Ser333 each carry the phosphoserine modification. ANK repeat units follow at residues 378 to 407 (HGTP…RIDV), 411 to 440 (GGSN…PLDV), 444 to 473 (SGEM…NPNI), 477 to 506 (EEET…NVNI), 510 to 539 (EGET…DLNA), 543 to 572 (DGHI…FVDY), 576 to 605 (HGNT…NLDI), and 609 to 638 (YGRT…SVEA). Positions 681-955 (TQNLQPRIKL…NHLQEIRSQI (275 aa)) constitute a Roc domain. At Ser734 the chain carries Phosphoserine; by MAPK1. The stretch at 875 to 904 (KLKNPLQVVLVATHADIMNVPRPAGGEFGY) is one ANK 9 repeat. At Ser1115 the chain carries Phosphoserine. The stretch at 1162 to 1196 (EGDADIRLWVNGCKLANRGAELLVLLVNHGQGIEV) is one ANK 10 repeat. In terms of domain architecture, Death spans 1312–1396 (KLSRLLDPPD…DAADFLLKAS (85 aa)).

It belongs to the protein kinase superfamily. CAMK Ser/Thr protein kinase family. DAP kinase subfamily. Interacts with KLHL20. Interacts (via death domain) with MAPK1 and MAPK3. Interacts with MAP1B (via N-terminus). Interacts with PRKD1 in an oxidative stress-regulated manner. Interacts with PIN1, PDCD6, BECN1, TSC2 and STX1A. Interacts (via kinase domain) with DAPK3 (via kinase domain). Interacts with GRINB. Interacts (via death domain) with UNC5B (via death domain). Interacts with UNC5C (via death domain). Mg(2+) is required as a cofactor. Post-translationally, ubiquitinated by the BCR(KLHL20) E3 ubiquitin ligase complex, leading to its degradation by the proteasome. Removal of the C-terminal tail of isoform 2 (corresponding to amino acids 296-337 of isoform 2) by proteolytic cleavage stimulates maximally its membrane-blebbing function. In terms of processing, in response to mitogenic stimulation (PMA or EGF), phosphorylated at Ser-289; phosphorylation suppresses DAPK1 pro-apoptotic function. Autophosphorylation at Ser-308 inhibits its catalytic activity. Phosphorylation at Ser-734 by MAPK1 increases its catalytic activity and promotes cytoplasmic retention of MAPK1. Endoplasmic-stress can cause dephosphorylation at Ser-308. Isoform 2 is expressed in normal intestinal tissue as well as in colorectal carcinomas.

The protein localises to the cytoplasm. It localises to the cytoskeleton. It carries out the reaction L-seryl-[protein] + ATP = O-phospho-L-seryl-[protein] + ADP + H(+). The catalysed reaction is L-threonyl-[protein] + ATP = O-phospho-L-threonyl-[protein] + ADP + H(+). Activated by Ca(2+)/calmodulin. Regulated by a locking mechanism, involving autophosphorylation at Ser-308 and calmodulin binding. In the inactive state, Ser-308 is phosphorylated. Activation involves its dephosphorylation and a release-of-autoinhibition mechanism where binding of calmodulin induces a conformational change that relieves the steric block of the active site by the autoinhibitory domain. Activity is modulated by UNC5B and NTN1. UNC5B activates it by inhibiting the phosphorylation at Ser-308, whereas NTN1 inhibits UNC5B-mediated activation of DAPK1. Endoplasmic-stress activates by causing Ser-308 dephosphorylation. Functionally, calcium/calmodulin-dependent serine/threonine kinase involved in multiple cellular signaling pathways that trigger cell survival, apoptosis, and autophagy. Regulates both type I apoptotic and type II autophagic cell deaths signal, depending on the cellular setting. The former is caspase-dependent, while the latter is caspase-independent and is characterized by the accumulation of autophagic vesicles. Phosphorylates PIN1 resulting in inhibition of its catalytic activity, nuclear localization, and cellular function. Phosphorylates TPM1, enhancing stress fiber formation in endothelial cells. Phosphorylates STX1A and significantly decreases its binding to STXBP1. Phosphorylates PRKD1 and regulates JNK signaling by binding and activating PRKD1 under oxidative stress. Phosphorylates BECN1, reducing its interaction with BCL2 and BCL2L1 and promoting the induction of autophagy. Phosphorylates TSC2, disrupting the TSC1-TSC2 complex and stimulating mTORC1 activity in a growth factor-dependent pathway. Phosphorylates RPS6, MYL9 and DAPK3. Acts as a signaling amplifier of NMDA receptors at extrasynaptic sites for mediating brain damage in stroke. Cerebral ischemia recruits DAPK1 into the NMDA receptor complex and it phosphorylates GRINB at Ser-1303 inducing injurious Ca(2+) influx through NMDA receptor channels, resulting in an irreversible neuronal death. Required together with DAPK3 for phosphorylation of RPL13A upon interferon-gamma activation which is causing RPL13A involvement in transcript-selective translation inhibition. Its function is as follows. Isoform 2 cannot induce apoptosis but can induce membrane blebbing. The sequence is that of Death-associated protein kinase 1 (DAPK1) from Homo sapiens (Human).